Here is a 214-residue protein sequence, read N- to C-terminus: Octanoyltransferase (214 aa).

Residues 28–203 (GSGAETLLLL…RFEGFLDEFM (176 aa)) form the BPL/LPL catalytic domain. Substrate contacts are provided by residues 66–73 (RGGDVTYH), 133–135 (SIG), and 146–148 (GFA). The active-site Acyl-thioester intermediate is Cys164.

It belongs to the LipB family.

The protein resides in the cytoplasm. The enzyme catalyses octanoyl-[ACP] + L-lysyl-[protein] = N(6)-octanoyl-L-lysyl-[protein] + holo-[ACP] + H(+). It functions in the pathway protein modification; protein lipoylation via endogenous pathway; protein N(6)-(lipoyl)lysine from octanoyl-[acyl-carrier-protein]: step 1/2. Its function is as follows. Catalyzes the transfer of endogenously produced octanoic acid from octanoyl-acyl-carrier-protein onto the lipoyl domains of lipoate-dependent enzymes. Lipoyl-ACP can also act as a substrate although octanoyl-ACP is likely to be the physiological substrate. This Geotalea uraniireducens (strain Rf4) (Geobacter uraniireducens) protein is Octanoyltransferase.